Here is a 198-residue protein sequence, read N- to C-terminus: MISLFISNFSNLSNLSPTFDNMNMNIPSKKIVPVPTPSEKVVSLVSRTGRDLQRYNTAGYRQVVGCVPYRYKKHGGGEIEVLLISAQKKGKGMLLPKGGWEIDESIEEAALRETIEEAGVTGQLEESLGKWQYKSKRHTMIHDGHMFPLLVSQQFEIWPESEFRQRKWVSLSEAIELCQNSWMREALEAFINRKCQTQ.

A chloroplast-targeting transit peptide spans 1 to 37; that stretch reads MISLFISNFSNLSNLSPTFDNMNMNIPSKKIVPVPTP. A Nudix hydrolase domain is found at 59–191; that stretch reads GYRQVVGCVP…WMREALEAFI (133 aa). The short motif at 98–119 is the Nudix box element; sequence GGWEIDESIEEAALRETIEEAG. The Mg(2+) site is built by E113 and E117.

Belongs to the Nudix hydrolase family. Mg(2+) serves as cofactor. It depends on Mn(2+) as a cofactor. As to expression, expressed in roots, leaves, stems and inflorescences.

It localises to the plastid. It is found in the chloroplast. Probably mediates the hydrolysis of some nucleoside diphosphate derivatives. The sequence is that of Nudix hydrolase 21, chloroplastic (NUDT21) from Arabidopsis thaliana (Mouse-ear cress).